A 271-amino-acid chain; its full sequence is Bifunctional protein FolD (271 aa).

NADP(+)-binding positions include 154–156 (GRS), S181, and I222.

The protein belongs to the tetrahydrofolate dehydrogenase/cyclohydrolase family. Homodimer.

The catalysed reaction is (6R)-5,10-methylene-5,6,7,8-tetrahydrofolate + NADP(+) = (6R)-5,10-methenyltetrahydrofolate + NADPH. The enzyme catalyses (6R)-5,10-methenyltetrahydrofolate + H2O = (6R)-10-formyltetrahydrofolate + H(+). Its pathway is one-carbon metabolism; tetrahydrofolate interconversion. Functionally, catalyzes the oxidation of 5,10-methylenetetrahydrofolate to 5,10-methenyltetrahydrofolate and then the hydrolysis of 5,10-methenyltetrahydrofolate to 10-formyltetrahydrofolate. The protein is Bifunctional protein FolD of Thermotoga petrophila (strain ATCC BAA-488 / DSM 13995 / JCM 10881 / RKU-1).